A 467-amino-acid chain; its full sequence is Probable protein phosphatase 2C 55 (467 aa).

Positions 222-458 (SCYLPHPDKE…DDITVVVSYV (237 aa)) constitute a PPM-type phosphatase domain. Positions 252, 253, 383, and 449 each coordinate Mn(2+).

It belongs to the PP2C family. The cofactor is Mg(2+). Mn(2+) is required as a cofactor.

It carries out the reaction O-phospho-L-seryl-[protein] + H2O = L-seryl-[protein] + phosphate. The catalysed reaction is O-phospho-L-threonyl-[protein] + H2O = L-threonyl-[protein] + phosphate. The chain is Probable protein phosphatase 2C 55 from Arabidopsis thaliana (Mouse-ear cress).